A 211-amino-acid chain; its full sequence is N-(5'-phosphoribosyl)anthranilate isomerase (211 aa).

It belongs to the TrpF family.

It catalyses the reaction N-(5-phospho-beta-D-ribosyl)anthranilate = 1-(2-carboxyphenylamino)-1-deoxy-D-ribulose 5-phosphate. It participates in amino-acid biosynthesis; L-tryptophan biosynthesis; L-tryptophan from chorismate: step 3/5. The protein is N-(5'-phosphoribosyl)anthranilate isomerase of Methanococcus maripaludis (strain C6 / ATCC BAA-1332).